Here is a 378-residue protein sequence, read N- to C-terminus: Protein RecA (378 aa).

Residue Gly-65–Thr-72 coordinates ATP. The segment at Ala-325–Lys-378 is disordered. Residues Asp-339–Asp-351 show a composition bias toward basic and acidic residues.

It belongs to the RecA family.

It is found in the cytoplasm. Its function is as follows. Can catalyze the hydrolysis of ATP in the presence of single-stranded DNA, the ATP-dependent uptake of single-stranded DNA by duplex DNA, and the ATP-dependent hybridization of homologous single-stranded DNAs. It interacts with LexA causing its activation and leading to its autocatalytic cleavage. This is Protein RecA from Lactiplantibacillus pentosus (Lactobacillus pentosus).